The primary structure comprises 212 residues: Large ribosomal subunit protein bL25 (212 aa).

The interval 181–212 (LSEPKEEVIEEDVEEVSADVPTVSETEEEDAE) is disordered. Positions 188-197 (VIEEDVEEVS) are enriched in acidic residues.

Belongs to the bacterial ribosomal protein bL25 family. CTC subfamily. Part of the 50S ribosomal subunit; part of the 5S rRNA/L5/L18/L25 subcomplex. Contacts the 5S rRNA. Binds to the 5S rRNA independently of L5 and L18.

This is one of the proteins that binds to the 5S RNA in the ribosome where it forms part of the central protuberance. The chain is Large ribosomal subunit protein bL25 from Finegoldia magna (strain ATCC 29328 / DSM 20472 / WAL 2508) (Peptostreptococcus magnus).